Reading from the N-terminus, the 88-residue chain is uncharacterized protein (88 aa).

Residues 1-31 (MIPRDPRSPAPDLSAINQPAGRAERRSGPAT) are disordered.

This is an uncharacterized protein from Escherichia coli.